Here is a 137-residue protein sequence, read N- to C-terminus: MVTIKIECRTIARGVAEGEVLLSEDALSFLGNVDPKTGVVVDPGHAIYGECIRDKILVFPHGKGSTVGSYVIYQLKKNNVSPAAMINIDSEPIVAVGAIISDIPLVDRLDKDPFTIFKNGDRVKVDSTSGFVELMDR.

Residue Ser65 is the Proton acceptor of the active site.

This sequence belongs to the AcnX type II small subunit family. Heterodimer composed of a large subunit (PMDh-L) and a small subunit (PMDh-S).

The catalysed reaction is (R)-5-phosphomevalonate = (2E)-3-methyl-5-phosphooxypent-2-enoate + H2O. It participates in isoprenoid biosynthesis; isopentenyl diphosphate biosynthesis via mevalonate pathway. In terms of biological role, component of a hydro-lyase that catalyzes the dehydration of mevalonate 5-phosphate (MVA5P) to form trans-anhydromevalonate 5-phosphate (tAHMP). Involved in the archaeal mevalonate (MVA) pathway, which provides fundamental precursors for isoprenoid biosynthesis, such as isopentenyl diphosphate (IPP) and dimethylallyl diphosphate (DMAPP). The protein is Phosphomevalonate dehydratase small subunit of Methanococcoides burtonii (strain DSM 6242 / NBRC 107633 / OCM 468 / ACE-M).